The following is a 287-amino-acid chain: Ribosomal RNA small subunit methyltransferase I (287 aa).

The protein belongs to the methyltransferase superfamily. RsmI family.

It localises to the cytoplasm. The enzyme catalyses cytidine(1402) in 16S rRNA + S-adenosyl-L-methionine = 2'-O-methylcytidine(1402) in 16S rRNA + S-adenosyl-L-homocysteine + H(+). In terms of biological role, catalyzes the 2'-O-methylation of the ribose of cytidine 1402 (C1402) in 16S rRNA. The sequence is that of Ribosomal RNA small subunit methyltransferase I from Streptococcus pyogenes serotype M6 (strain ATCC BAA-946 / MGAS10394).